The chain runs to 341 residues: MLRFVVGTYTHLIYGVDADIERKKCKPLWLFEAHEGALTALAVDGIYLASTSSDETIKIFDHTRNVQIADVSVPTDIANACIRDMCFTKNHLLACHDNGQISMWSKGSWLLVHTLKSSSHKGITGIAVHPSEKLALTVGGDGKLRLWDLVRGKGGKVLPLSTIPESILFLNESSFVIMSRRGIDAFKLDLTSLFSFSSKSQLNALCLYQSKLIVGRDNGTVLVLDTSDGKILHEFTAHKKRVKSVYPVDDYLITASSDGSVCIWDKDWNLVIEHNIPEGNRITCMVAMLADSNSEPKNVEDEAAKRQSLDSETSETSSESESESEYYSTSKQPPVKRTKHA.

5 WD repeats span residues 33-70 (AHEG…QIAD), 77-114 (IANA…LVHT), 119-157 (SHKG…GGKV), 197-234 (SSKS…ILHE), and 237-274 (AHKK…VIEH). The interval 293 to 341 (NSEPKNVEDEAAKRQSLDSETSETSSESESESEYYSTSKQPPVKRTKHA) is disordered. Basic and acidic residues predominate over residues 297–309 (KNVEDEAAKRQSL).

Negatively regulates pak1/shk1 kinase activity leading to proper execution of cytoskeletal remodeling and cytokinetic functions. Its function is as follows. Interacts with pak1/shk1. This is Shk1 kinase-binding protein 15 (skb15) from Schizosaccharomyces pombe (strain 972 / ATCC 24843) (Fission yeast).